A 69-amino-acid chain; its full sequence is MTKLALLLIRFYQRFISPGLPPACRFYPTCSEYGYEAISRYGIIKGGVLTVRRLLRCHPFHPGGYDPVP.

The protein belongs to the UPF0161 family.

It is found in the cell membrane. In terms of biological role, could be involved in insertion of integral membrane proteins into the membrane. This is Putative membrane protein insertion efficiency factor from Thermomicrobium roseum (strain ATCC 27502 / DSM 5159 / P-2).